The chain runs to 476 residues: MNDAGASIGRHRGCLLLFVALAVAFSSYVEQVESMPAEPVSQWPTFPRRNIAALARDGYLRNSASRAYKRGISTLAKNGLLPTYRSPYVETDKEDQNQDESQEKRNMASIARLRSYAAMKRNIQALARDGYRVGRGQYNPSNDKRNIAALARNGLLHKKDEATENEYYFPFYQNPIAPLSEIDHPLDVNEMYDFQQSMNPDMFPSMSQVYKRSLYEPYYDYYSPKDYDNSYFKRSSAGSPVHGLYRPNYLEPNTRTKRYVMPYPDILEGDEMIEQNDIDGEKRSVDDDDDDDDDDGEVHENFQKRHIGSLARLGLLPSFRYSGGRYSRSGRARLLLPSQELYRKHSPDENFGIREYLSSPEVESPVDPDDADIPPPPVPAHSHPTGRLLHRPLSNDLPHTSPLPLPPIAPTNYADTFTKNRWQSYTKETPKFYYFRSLKVPYHTSGKRYLLLPAVDNILLRKGYRNSSLPSRRKNQ.

The signal sequence occupies residues 1–34 (MNDAGASIGRHRGCLLLFVALAVAFSSYVEQVES). Valine amide is present on Val133. 2 consecutive propeptides follow at residues 160-232 (DEAT…NSYF) and 259-476 (YVMP…RKNQ). 2 disordered regions span residues 275 to 298 (QNDI…DGEV) and 360 to 385 (PEVE…SHPT). Residues 286–297 (DDDDDDDDDDGE) show a composition bias toward acidic residues.

Neuropeptide-like precursor 1-1: Expressed in antennal lobe (AL), corpora cardiaca (CC), corpora allata (CA) and gnathal ganglion (GNG) (at protein level). Expression in AL detected in all animals, in GNG in most animals, expression in CC and CA in few animals (at protein level). Neuropeptide-like precursor 1-2: Expressed in antennal lobe (AL), corpora cardiaca (CC), corpora allata (CA) and gnathal ganglion (GNG) (at protein level). Expression in AL detected in all animals, in GNG in some animals, expression in CC and CA in few animals (at protein level). Neuropeptide-like precursor 1-3: Not expressed in antennal lobe (AL), corpora cardiaca (CC), corpora allata (CA) and gnathal ganglion (GNG) (at protein level). Neuropeptide-like precursor 1-4: Expressed in antennal lobe (AL) and gnathal ganglion (GNG) (at protein level). Expression in AL detected in most animals, in GNG in some animals (at protein level). Not expressed in CC and CA (at protein level). YRVamide: Expressed in antennal lobe (AL), corpora cardiaca (CC), corpora allata (CA) and gnathal ganglion (GNG) (at protein level). Expression in AL and GNG detected in most animals, expression in CC and CA in few animals (at protein level). Extended YRVamide: Expressed in antennal lobe (AL) and gnathal ganglion (GNG) (at protein level). Expression in AL detected in most animals, in GNG in some animals (at protein level). Not expressed in corpora cardiaca (CC) and corpora allata (CA) (at protein level). Neuropeptide-like precursor 1-6: Expressed in antennal lobe (AL), corpora cardiaca (CC), corpora allata (CA) and gnathal ganglion (GNG) (at protein level). Expression in GNG detected in all animals, expression in AL in most animals, in CC and CA in few animals (at protein level). Neuropeptide-like precursor 1-6(1-11): Expressed in antennal lobe (AL) and gnathal ganglion (GNG) in most animals (at protein level). Not expressed in corpora cardiaca (CC) and corpora allata (CA) (at protein level). Neuropeptide-like precursor 1-9: Expressed in antennal lobe (AL) and gnathal ganglion (GNG) (at protein level). Expression in AL detected in all animals in GNG in most (at protein level). Not expressed in corpora cardiaca (CC) and corpora allata (CA) (at protein level).

The protein localises to the secreted. This chain is Neuropeptide-like precursor 1, found in Agrotis ipsilon (Black cutworm moth).